We begin with the raw amino-acid sequence, 306 residues long: Glutaminase (306 aa).

Substrate-binding residues include serine 61, asparagine 111, glutamate 157, asparagine 164, tyrosine 188, tyrosine 240, and valine 258.

The protein belongs to the glutaminase family. Homotetramer.

It carries out the reaction L-glutamine + H2O = L-glutamate + NH4(+). The sequence is that of Glutaminase from Psychrobacter cryohalolentis (strain ATCC BAA-1226 / DSM 17306 / VKM B-2378 / K5).